The primary structure comprises 74 residues: UPF0352 protein MS1910 (74 aa).

This sequence belongs to the UPF0352 family.

In Mannheimia succiniciproducens (strain KCTC 0769BP / MBEL55E), this protein is UPF0352 protein MS1910.